A 470-amino-acid polypeptide reads, in one-letter code: Cyclic AMP-responsive element-binding protein 3-like protein 3 (470 aa).

At 1 to 319 the chain is on the cytoplasmic side; the sequence is MDGDISTGKM…TSKPAHAGTC (319 aa). Residues 59–145 are disordered; the sequence is SDSDEFLNSI…PEPPRTQVHE (87 aa). In terms of domain architecture, bZIP spans 239 to 302; sequence VLKKIRRKIR…LSLLEQLKHL (64 aa). The segment at 241 to 270 is basic motif; the sequence is KKIRRKIRNKQSAQESRKKKKEYIDGLENR. The interval 281–302 is leucine-zipper; it reads LQRKVLHLEKQNLSLLEQLKHL. Residue lysine 290 forms a Glycyl lysine isopeptide (Lys-Gly) (interchain with G-Cter in ubiquitin) linkage. The chain crosses the membrane as a helical; Signal-anchor for type II membrane protein span at residues 320 to 340; it reads IAVLLLSFVLIILPSISPFTA. The Lumenal segment spans residues 341–470; the sequence is NKVDSPGDFI…RVVQDALGVL (130 aa). Residues asparagine 410 and asparagine 417 are each glycosylated (N-linked (GlcNAc...) asparagine).

This sequence belongs to the bZIP family. ATF subfamily. In terms of assembly, binds DNA as a dimer. May form homodimers. Interacts with ATF6. Interacts with SYNV1/HRD1; this interaction leads to CREB3L3 ubiquitination and proteasomal degradation. In terms of processing, controlled by regulated intramembrane proteolysis (RIP). Following ER stress a fragment containing the cytoplasmic transcription factor domain is released by proteolysis. The cleavage seems to be performed sequentially by site-1 and site-2 proteases (PS1 and PS2). Post-translationally, N-glycosylation is required for optimal proteolytic activation. Ubiquitinated at Lys-290 by SYNV1/HRD1 via 'Lys-27'-linked ubiquitin.

It localises to the endoplasmic reticulum membrane. Its subcellular location is the nucleus. In terms of biological role, transcription factor that may act during endoplasmic reticulum stress by activating unfolded protein response target genes. Activated in response to cAMP stimulation. Binds the cAMP response element (CRE). Activates transcription through box-B element and CRE. Seems to function synergistically with ATF6. In acute inflammatory response, may activate expression of acute phase response (APR) genes. May be involved in growth suppression. Regulates FGF21 transcription. Plays a crucial role in the regulation of triglyceride metabolism and is required for the maintenance of normal plasma triglyceride concentrations. The chain is Cyclic AMP-responsive element-binding protein 3-like protein 3 (Creb3l3) from Rattus norvegicus (Rat).